The sequence spans 417 residues: Serine hydroxymethyltransferase (417 aa).

(6S)-5,6,7,8-tetrahydrofolate contacts are provided by residues Leu-121 and 125-127 (GHL). Residue Lys-229 is modified to N6-(pyridoxal phosphate)lysine. Residue 355–357 (SPF) participates in (6S)-5,6,7,8-tetrahydrofolate binding.

The protein belongs to the SHMT family. Homodimer. Pyridoxal 5'-phosphate serves as cofactor.

It is found in the cytoplasm. The enzyme catalyses (6R)-5,10-methylene-5,6,7,8-tetrahydrofolate + glycine + H2O = (6S)-5,6,7,8-tetrahydrofolate + L-serine. It functions in the pathway one-carbon metabolism; tetrahydrofolate interconversion. The protein operates within amino-acid biosynthesis; glycine biosynthesis; glycine from L-serine: step 1/1. Its function is as follows. Catalyzes the reversible interconversion of serine and glycine with tetrahydrofolate (THF) serving as the one-carbon carrier. This reaction serves as the major source of one-carbon groups required for the biosynthesis of purines, thymidylate, methionine, and other important biomolecules. Also exhibits THF-independent aldolase activity toward beta-hydroxyamino acids, producing glycine and aldehydes, via a retro-aldol mechanism. The sequence is that of Serine hydroxymethyltransferase from Erwinia tasmaniensis (strain DSM 17950 / CFBP 7177 / CIP 109463 / NCPPB 4357 / Et1/99).